A 629-amino-acid polypeptide reads, in one-letter code: Pentatricopeptide repeat-containing protein At1g63150 (629 aa).

PPR repeat units follow at residues 46–81, 82–116, 117–151, 152–186, 187–221, 222–256, 257–291, 292–326, 327–361, 362–396, 397–431, 432–466, 467–501, 502–532, 534–568, and 569–603; these read ASGDYREILRNRLSDIIKVDDAVDLFGDMVKSRPFP, SIVEFNKLLSAVAKMNKFELVISLGEQMQTLGISH, DLYTYSIFINCFCRRSQLSLALAVLAKMMKLGYEP, DIVTLSSLLNGYCHSKRISDAVALVDQMVEMGYKP, DTFTFTTLIHGLFLHNKASEAVALVDQMVQRGCQP, DLVTYGTVVNGLCKRGDIDLALNLLNKMEAARIKA, NVVIFNTIIDSLCKYRHVEVAVDLFTEMETKGIRP, NVVTYNSLINCLCNYGRWSDASRLLSNMLEKKINP, NVVTFNALIDAFFKEGKLVEAEKLHEEMIQRSIDP, DTITYNLLINGFCMHNRLDEAKQMFKFMVSKDCLP, NIQTYNTLINGFCKCKRVEDGVELFREMSQRGLVG, NTVTYTTIIQGFFQAGDCDSAQMVFKQMVSNRVPT, DIMTYSILLHGLCSYGKLDTALVIFKYLQKSEMEL, NIFIYNTMIEGMCKAGKVGEAWDLFCSLSIK, DVVTYNTMISGLCSKRLLQEADDLFRKMKEDGTLP, and NSGTYNTLIRANLRDCDRAASAELIKEMRSSGFVG.

The protein belongs to the PPR family. P subfamily.

The chain is Pentatricopeptide repeat-containing protein At1g63150 from Arabidopsis thaliana (Mouse-ear cress).